The chain runs to 459 residues: Argininosuccinate lyase (459 aa).

The protein belongs to the lyase 1 family. Argininosuccinate lyase subfamily.

The protein resides in the cytoplasm. It catalyses the reaction 2-(N(omega)-L-arginino)succinate = fumarate + L-arginine. Its pathway is amino-acid biosynthesis; L-arginine biosynthesis; L-arginine from L-ornithine and carbamoyl phosphate: step 3/3. The polypeptide is Argininosuccinate lyase (Ruminiclostridium cellulolyticum (strain ATCC 35319 / DSM 5812 / JCM 6584 / H10) (Clostridium cellulolyticum)).